Here is a 300-residue protein sequence, read N- to C-terminus: Tumor necrosis factor receptor superfamily member 6B (300 aa).

The N-terminal stretch at 1–29 (MRALEGPGLSLLCLVLALPALLPVPAVRG) is a signal peptide. TNFR-Cys repeat units lie at residues 31–70 (AETPTYPWRDAETGERLVCAQCPPGTFVQRPCRRDSPTTC), 72–113 (PCPP…NRAC), 115–150 (CRTGFFAHAGFCLEHASCPPGAGVIAPGTPSQNTQC), and 152–193 (PCPP…DTLC). 8 disulfides stabilise this stretch: C49-C62, C52-C70, C73-C88, C91-C105, C95-C113, C115-C126, C132-C150, and C153-C168. N-linked (GlcNAc...) asparagine glycosylation occurs at N173. C174 and C193 are oxidised to a cystine.

Detected in fetal lung, brain and liver. Detected in adult stomach, spinal cord, lymph node, trachea, spleen, colon and lung. Highly expressed in several primary tumors from colon, stomach, rectum, esophagus and in SW480 colon carcinoma cells.

Its subcellular location is the secreted. Decoy receptor that can neutralize the cytotoxic ligands TNFS14/LIGHT, TNFSF15 and TNFSF6/FASL. Protects against apoptosis. This Homo sapiens (Human) protein is Tumor necrosis factor receptor superfamily member 6B (TNFRSF6B).